Consider the following 1231-residue polypeptide: Alpha-protein kinase 1 (1231 aa).

Residues Phe61, Gln67, Arg116, 150-153 (RQAR), Asp231, Lys233, 236-237 (ST), and Phe295 contribute to the ADP-D-glycero-beta-D-manno-heptose site. Disordered stretches follow at residues 508–540 (ERVSSQDSRSTASSKMSKKDQGKLQRERGRSWT), 609–637 (GSGQEKHPVEAQSSEAVSEEPKRNRSSRA), 692–739 (GSNN…GDVP), 767–791 (TFAPSSVDPEGETAESTDDGLSPSQ), 811–843 (PDGSVQNADSAKTGCSVRDQTVDPDASTVDEEG), and 859–888 (AHRPRALRSGQSAEGPKSFVNGSRPSPIFD). The segment covering 509 to 522 (RVSSQDSRSTASSK) has biased composition (polar residues). Residues 524–537 (SKKDQGKLQRERGR) show a composition bias toward basic and acidic residues. Low complexity predominate over residues 700–714 (SSHSCGSDSWSLSSS). Over residues 775–784 (PEGETAESTD) the composition is skewed to acidic residues. Residues 1003–1223 (KYSKKSELWT…ICHRLSLTRP (221 aa)) enclose the Alpha-type protein kinase domain.

It belongs to the protein kinase superfamily. Alpha-type protein kinase family. ALPK subfamily. In terms of tissue distribution, widely expressed. Expressed in the retina and in sweat glands, especially in the myoepithelial cells.

The protein localises to the cytoplasm. The protein resides in the cytosol. It localises to the cytoskeleton. Its subcellular location is the spindle pole. It is found in the microtubule organizing center. The protein localises to the centrosome. The protein resides in the cell projection. It localises to the cilium. The catalysed reaction is L-seryl-[protein] + ATP = O-phospho-L-seryl-[protein] + ADP + H(+). It catalyses the reaction L-threonyl-[protein] + ATP = O-phospho-L-threonyl-[protein] + ADP + H(+). Its activity is regulated as follows. Serine/threonine-protein kinase activity is stimulated upon ADP-D-glycero-beta-D-manno-heptose (ADP-Heptose)-binding. Serine/threonine-protein kinase that detects bacterial pathogen-associated molecular pattern metabolites (PAMPs) and initiates an innate immune response, a critical step for pathogen elimination and engagement of adaptive immunity. Specifically recognizes and binds ADP-D-glycero-beta-D-manno-heptose (ADP-Heptose), a potent PAMP present in all Gram-negative and some Gram-positive bacteria. ADP-Heptose-binding stimulates its kinase activity to phosphorylate and activate TIFA, triggering pro-inflammatory NF-kappa-B signaling. May be involved in monosodium urate monohydrate (MSU)-induced inflammation by mediating phosphorylation of unconventional myosin MYO9A. May also play a role in apical protein transport by mediating phosphorylation of unconventional myosin MYO1A. May play a role in ciliogenesis. The chain is Alpha-protein kinase 1 from Mus musculus (Mouse).